We begin with the raw amino-acid sequence, 347 residues long: S-adenosylmethionine:tRNA ribosyltransferase-isomerase (347 aa).

It belongs to the QueA family. Monomer.

The protein resides in the cytoplasm. It carries out the reaction 7-aminomethyl-7-carbaguanosine(34) in tRNA + S-adenosyl-L-methionine = epoxyqueuosine(34) in tRNA + adenine + L-methionine + 2 H(+). It participates in tRNA modification; tRNA-queuosine biosynthesis. In terms of biological role, transfers and isomerizes the ribose moiety from AdoMet to the 7-aminomethyl group of 7-deazaguanine (preQ1-tRNA) to give epoxyqueuosine (oQ-tRNA). The sequence is that of S-adenosylmethionine:tRNA ribosyltransferase-isomerase from Pseudomonas aeruginosa (strain UCBPP-PA14).